A 320-amino-acid chain; its full sequence is o-succinylbenzoate synthase (320 aa).

Lys-133 acts as the Proton donor in catalysis. Positions 161, 190, and 213 each coordinate Mg(2+). The active-site Proton acceptor is the Lys-235.

It belongs to the mandelate racemase/muconate lactonizing enzyme family. MenC type 1 subfamily. A divalent metal cation serves as cofactor.

It carries out the reaction (1R,6R)-6-hydroxy-2-succinyl-cyclohexa-2,4-diene-1-carboxylate = 2-succinylbenzoate + H2O. The protein operates within quinol/quinone metabolism; 1,4-dihydroxy-2-naphthoate biosynthesis; 1,4-dihydroxy-2-naphthoate from chorismate: step 4/7. It functions in the pathway quinol/quinone metabolism; menaquinone biosynthesis. Functionally, converts 2-succinyl-6-hydroxy-2,4-cyclohexadiene-1-carboxylate (SHCHC) to 2-succinylbenzoate (OSB). The protein is o-succinylbenzoate synthase of Escherichia coli O157:H7.